The following is a 40-amino-acid chain: Natriuretic peptide PpNP-a (40 aa).

A propeptide spanning residues 1-8 (SGSKTANI) is cleaved from the precursor. Residues 1–40 (SGSKTANIGDGCFGVPIDHIGSTSGMGCGSPRPKPTPGGS) form a disordered region. Cysteines 12 and 28 form a disulfide.

The protein belongs to the natriuretic peptide family. Expressed by the venom gland.

Its subcellular location is the secreted. Snake venom natriuretic peptide that targets both NPR1 and NPR2. Exhibits hypotensive and vasodepressor activities. The chain is Natriuretic peptide PpNP-a from Pseudechis porphyriacus (Red-bellied black snake).